A 450-amino-acid chain; its full sequence is Glutamyl-tRNA reductase (450 aa).

Substrate contacts are provided by residues 50 to 53 (TCNR), Ser-109, 114 to 116 (EPQ), and Gln-120. Catalysis depends on Cys-51, which acts as the Nucleophile. An NADP(+)-binding site is contributed by 189 to 194 (GAGEMA). Residues 422-450 (NEPEQPEAHKNRKRPQPDLPAGCPGKTIL) are disordered.

This sequence belongs to the glutamyl-tRNA reductase family. Homodimer.

The enzyme catalyses (S)-4-amino-5-oxopentanoate + tRNA(Glu) + NADP(+) = L-glutamyl-tRNA(Glu) + NADPH + H(+). It participates in porphyrin-containing compound metabolism; protoporphyrin-IX biosynthesis; 5-aminolevulinate from L-glutamyl-tRNA(Glu): step 1/2. In terms of biological role, catalyzes the NADPH-dependent reduction of glutamyl-tRNA(Glu) to glutamate 1-semialdehyde (GSA). This is Glutamyl-tRNA reductase from Oleidesulfovibrio alaskensis (strain ATCC BAA-1058 / DSM 17464 / G20) (Desulfovibrio alaskensis).